We begin with the raw amino-acid sequence, 123 residues long: Histone H2B.3 (123 aa).

The segment at Met1–Lys30 is disordered. Ser110 carries O-linked (GlcNAc) serine glycosylation. Residue Lys118 forms a Glycyl lysine isopeptide (Lys-Gly) (interchain with G-Cter in ubiquitin) linkage.

It belongs to the histone H2B family. The nucleosome is a histone octamer containing two molecules each of H2A, H2B, H3 and H4 assembled in one H3-H4 heterotetramer and two H2A-H2B heterodimers. The octamer wraps approximately 147 bp of DNA. Post-translationally, monoubiquitination of Lys-118 gives a specific tag for epigenetic transcriptional activation and is also prerequisite for histone H3 'Lys-4' and 'Lys-79' methylation. In terms of processing, glcNAcylation at Ser-110 promotes monoubiquitination of Lys-118. It fluctuates in response to extracellular glucose, and associates with transcribed genes.

It is found in the nucleus. It localises to the chromosome. In terms of biological role, core component of nucleosome. Nucleosomes wrap and compact DNA into chromatin, limiting DNA accessibility to the cellular machineries which require DNA as a template. Histones thereby play a central role in transcription regulation, DNA repair, DNA replication and chromosomal stability. DNA accessibility is regulated via a complex set of post-translational modifications of histones, also called histone code, and nucleosome remodeling. The protein is Histone H2B.3 of Tigriopus californicus (Marine copepod).